The chain runs to 376 residues: MKVLTVFGTRPEAIKMAPLVHALAQDDAFESRVCVTAQHREMLDQVLRLFEIQPDYDLDIMRPGQGLTEITCRILEGLKPVLEEFKPDVILVHGDTTTTLSASLAGFYHRIPVGHVEAGLRTGDLYSPWPEEANRQLTGHLAMYHFAPTENSRQNLLREWVPENRIFVTGNTVIDALFWVRDRVMNTPDLRANLAQRYAFLDTNKKMILVTGHRRESFGGGFERICSALAEIARKHPEVQVVYPVHLNPNVSEPVNRILKGIDNIILIDPQDYLPFVYLMNHAYLILTDSGGIQEEAPSLGKPVLVMRDTTERPEAVDSGTVLLVGTNINKIVDAVTRLLTDETAYHQMTRAHNPYGDGYACQRILKALKNHQVTL.

Substrate-binding positions include arginine 10, lysine 15, aspartate 95, glutamate 117, histidine 213, glutamine 271, phenylalanine 276, 290–292 (SGG), glutamate 296, and arginine 313.

The protein belongs to the UDP-N-acetylglucosamine 2-epimerase family. Homodimer.

Its subcellular location is the cytoplasm. It carries out the reaction UDP-N-acetyl-alpha-D-glucosamine = UDP-N-acetyl-alpha-D-mannosamine. It participates in bacterial outer membrane biogenesis; enterobacterial common antigen biosynthesis. Catalyzes the reversible epimerization at C-2 of UDP-N-acetylglucosamine (UDP-GlcNAc) and thereby provides bacteria with UDP-N-acetylmannosamine (UDP-ManNAc), the activated donor of ManNAc residues. The protein is UDP-N-acetylglucosamine 2-epimerase of Yersinia pestis.